The primary structure comprises 303 residues: Zinc transporter ZIP9-B (303 aa).

A helical membrane pass occupies residues 7–27 (ISLLSLAMLVGCYVSGIIPLA). N29 is a glycosylation site (N-linked (GlcNAc...) asparagine). 5 consecutive transmembrane segments (helical) span residues 35-55 (LKLVTVLGAGLLCGTALAVIV), 102-122 (AYIGVSLVLGFVFMLLVDQIG), 142-162 (ITTTLGLVVHAAADGVALGAA), 172-192 (LIVFVAIMLHKAPAAFGLVSF), and 206-226 (HLLVFALAAPLLSMLTYLGLS). An N-linked (GlcNAc...) asparagine glycan is attached at N237. The next 2 helical transmembrane spans lie at 240–260 (GVAMLFSAGTFLYVATVHVLP) and 282–302 (LEVCALVLGCLIPLVLSIGHQ).

This sequence belongs to the ZIP transporter (TC 2.A.5) family.

It is found in the golgi apparatus. It localises to the trans-Golgi network membrane. The protein resides in the cell membrane. The protein localises to the cytoplasm. Its subcellular location is the perinuclear region. It is found in the mitochondrion. It localises to the nucleus. It catalyses the reaction Zn(2+)(in) = Zn(2+)(out). Transports zinc ions across cell and organelle membranes into the cytoplasm and regulates intracellular zinc homeostasis. Participates in the zinc ions efflux out of the secretory compartments. Regulates intracellular zinc level, resulting in the enhancement of AKT1 and MAPK3/MAPK1 (Erk1/2) phosphorylation in response to the BCR activation. Also functions as a membrane androgen receptor that mediates, through a G protein, the non-classical androgen signaling pathway, characterized by the activation of MAPK3/MAPK1 (Erk1/2) and transcription factors CREB1 or ATF1. Moreover, has dual functions as a membrane-bound androgen receptor and as an androgen-dependent zinc transporter both of which are mediated through an inhibitory G protein (Gi) that mediates both MAP kinase and zinc signaling leading to the androgen-dependent apoptotic process. This chain is Zinc transporter ZIP9-B (slc39a9-b), found in Xenopus laevis (African clawed frog).